A 221-amino-acid polypeptide reads, in one-letter code: 2-amino-5-formylamino-6-ribosylaminopyrimidin-4(3H)-one 5'-monophosphate deformylase (221 aa).

Residues Glu-29, His-31, Asp-40, and His-108 each coordinate Fe cation.

This sequence belongs to the creatininase superfamily. FAPy deformylase family. In terms of assembly, homodimer. Fe(2+) is required as a cofactor. Requires Zn(2+) as cofactor.

It carries out the reaction 2-amino-5-formylamino-6-(5-phospho-D-ribosylamino)pyrimidin-4(3H)-one + H2O = 2,5-diamino-6-(1-D-ribosylamino)pyrimidin-4(3H)-one 5'-phosphate + formate + H(+). The protein operates within cofactor biosynthesis; coenzyme F420 biosynthesis. Its pathway is cofactor biosynthesis; riboflavin biosynthesis. In terms of biological role, catalyzes the hydrolysis of the formamide of 2-amino-5-formylamino-6-ribosylamino-4(3H)-pyrimidinone 5'-monophosphate (FAPy) to form 2,5-diamino-6-ribosylamino-4(3H)-pyrimidinone 5'-phosphate (APy). This Methanococcus maripaludis (strain C7 / ATCC BAA-1331) protein is 2-amino-5-formylamino-6-ribosylaminopyrimidin-4(3H)-one 5'-monophosphate deformylase.